The sequence spans 5099 residues: Malformin synthetase mlfA (5099 aa).

The adenylation 1 stretch occupies residues 224–615 (QRHAADRPHS…CGRADTQVKL (392 aa)). Residues 756 to 829 (THLENEIQLA…EAASLAKVRD (74 aa)) form the Carrier 1 domain. O-(pantetheine 4'-phosphoryl)serine is present on Ser790. Positions 867–1297 (EDVFPCTSMQ…PVDSLTLLKP (431 aa)) are condensation 1. The tract at residues 1325 to 1717 (DRWVNRQPDT…GRKDTQVKLR (393 aa)) is adenylation 2. The Carrier 2 domain occupies 1857–1934 (ARAPELERTL…QIATQCEGIA (78 aa)). An O-(pantetheine 4'-phosphoryl)serine modification is found at Ser1894. Positions 1995–2040 (MQQESSSSPAPSVSSSSSSSSAPKPLLAQPEPPTNLRDSVPEPFSL) are disordered. Low complexity predominate over residues 1999 to 2017 (SSSSPAPSVSSSSSSSSAP). Residues 2067-2482 (EDIYPATPLQ…ALSPGDKKVL (416 aa)) form a condensation 2 region. The tract at residues 2505–2897 (LSTPHAPAVC…VGRKDGQLKL (393 aa)) is adenylation 3. Residues 3032–3108 (RPATAQERGL…RLVLHLQNTS (77 aa)) form the Carrier 3 domain. The residue at position 3069 (Ser3069) is an O-(pantetheine 4'-phosphoryl)serine. Condensation stretches follow at residues 3125 to 3589 (WVHL…TYDQ) and 3610 to 4033 (DIYP…QQAM). Residues 4058-4446 (YANREAVCAW…VGRKDSQIKF (389 aa)) form an adenylation 4 region. Positions 4581-4657 (PPSTGMQQGI…DLAEHISSRV (77 aa)) constitute a Carrier 4 domain. Ser4618 is modified (O-(pantetheine 4'-phosphoryl)serine). Residues 4696 to 5017 (DILPTTGFQR…LQTVVQHQNV (322 aa)) are condensation 5.

This sequence belongs to the NRP synthetase family.

It participates in secondary metabolite biosynthesis. Its function is as follows. Nonribosomal peptide synthetase; part of the gene cluster that mediates the biosynthesis of malformins, cyclic pentapeptides with a disulfide bond between 2 consecutive cysteins, that show potential anti-tumor as well as antimalarial and antitrypanosomal properties. The nonribosomal peptide synthetase mlfA is responsible of the formation of the cyclic pentapeptide. The malformin biosynthesis clusters in malformin-producing fungi also contain enzymes involved in the formation of the disulfide bond between the two consecutive cysteins within malformins, in addition to additional tailoring enzymes such as methyltransferases or oxidoreductases. They are also composed of up to 4 major facilitator superfamily transporters, and transcription factors probably involved in the regulation of the expression of those clusters. In Aspergillus sclerotiicarbonarius (strain CBS 121057 / IBT 28362), this protein is Malformin synthetase mlfA.